A 238-amino-acid chain; its full sequence is ATP synthase subunit a (238 aa).

5 consecutive transmembrane segments (helical) span residues 15–35, 76–96, 111–131, 167–187, and 208–230; these read IFNL…FVFI, YSLF…LGLM, PTAN…LTHI, LALR…LLLL, and AFSV…VYLG.

Belongs to the ATPase A chain family. In terms of assembly, F-type ATPases have 2 components, CF(1) - the catalytic core - and CF(0) - the membrane proton channel. CF(1) has five subunits: alpha(3), beta(3), gamma(1), delta(1), epsilon(1). CF(0) has three main subunits: a(1), b(2) and c(9-12). The alpha and beta chains form an alternating ring which encloses part of the gamma chain. CF(1) is attached to CF(0) by a central stalk formed by the gamma and epsilon chains, while a peripheral stalk is formed by the delta and b chains.

The protein resides in the cell membrane. Functionally, key component of the proton channel; it plays a direct role in the translocation of protons across the membrane. This Streptococcus pneumoniae serotype 19F (strain G54) protein is ATP synthase subunit a.